Consider the following 483-residue polypeptide: UDP-N-acetylmuramate--L-alanine ligase (483 aa).

Residue 128 to 134 (GTHGKTT) coordinates ATP.

The protein belongs to the MurCDEF family.

It is found in the cytoplasm. The enzyme catalyses UDP-N-acetyl-alpha-D-muramate + L-alanine + ATP = UDP-N-acetyl-alpha-D-muramoyl-L-alanine + ADP + phosphate + H(+). The protein operates within cell wall biogenesis; peptidoglycan biosynthesis. In terms of biological role, cell wall formation. The chain is UDP-N-acetylmuramate--L-alanine ligase from Shewanella violacea (strain JCM 10179 / CIP 106290 / LMG 19151 / DSS12).